A 573-amino-acid polypeptide reads, in one-letter code: Glutathione hydrolase 5 proenzyme (573 aa).

The Cytoplasmic segment spans residues 1 to 8 (MAWGHRAT). The helical; Signal-anchor for type II membrane protein transmembrane segment at 9 to 29 (VCLVLLGVGLGLVIVVLAAVL) threads the bilayer. Residues 30–573 (SPRQASCGPG…LRKAGKASGY (544 aa)) are Extracellular-facing. Asparagine 98 carries N-linked (GlcNAc...) asparagine glycosylation. L-glutamate is bound at residue arginine 110. Asparagine 185, asparagine 204, asparagine 277, asparagine 303, asparagine 347, and asparagine 378 each carry an N-linked (GlcNAc...) asparagine glycan. Threonine 389 acts as the Nucleophile in catalysis. Residues threonine 407, glutamate 428, and 454–455 (SS) each bind L-glutamate.

This sequence belongs to the gamma-glutamyltransferase family. Heterodimer composed of the light and heavy chains. The active site is located in the light chain. Post-translationally, cleaved by autocatalysis into a large and a small subunit. In terms of processing, glycosylated. As to expression, very low level of expression. Detected in spleen lymphocytes, medullary and paracortical thymic lymphocytes, lung interstitial cells, bronchial epithelium, proximal tubules in kidney, crypt cells in small intestine, neurons in brain stem and cerebral cortex and in Purkinje cells. Very low expression.

The protein resides in the membrane. It carries out the reaction glutathione + H2O = L-cysteinylglycine + L-glutamate. It catalyses the reaction an S-substituted glutathione + H2O = an S-substituted L-cysteinylglycine + L-glutamate. The catalysed reaction is leukotriene C4 + H2O = leukotriene D4 + L-glutamate. The enzyme catalyses S-[(2E,6E,10E)-geranylgeranyl]-L-glutathione + H2O = S-[(2E,6E,10E)-geranylgeranyl]-L-cysteinylglycine + L-glutamate. It carries out the reaction an N-terminal (5-L-glutamyl)-[peptide] + an alpha-amino acid = 5-L-glutamyl amino acid + an N-terminal L-alpha-aminoacyl-[peptide]. The protein operates within lipid metabolism; leukotriene D4 biosynthesis. It participates in sulfur metabolism; glutathione metabolism. Its activity is regulated as follows. Inhibited by serine-borate. Functionally, cleaves the gamma-glutamyl bond of extracellular glutathione tripeptide (gamma-Glu-Cys-Gly) and certain glutathione conjugates. Hydrolyzes glutathione releasing L-Glu and Cys-Gly dipeptide which is further metabolized to maintain extracellular cysteine levels but also to provide cysteine necessary for intracellular glutathione synthesis. Among glutathione-S-conjugates metabolizes leukotriene C4 (LTC4) and S-geranylgeranyl-glutathione (GGG), but is inactive toward gamma-glutamyl leucine. Converts extracellular LTC4 to LTD4 during acute inflammatory response. Acts as a negative regulator of GGG bioactivity. GGT5 (via GGG catabolism) and ABCC1 (via extracellular transport) establish GGG gradients within lymphoid tissues to position P2RY8-positive lymphocytes at germinal centers in lymphoid follicles and restrict their chemotactic transmigration from blood vessels to bone marrow parenchyma. The transpeptidation reaction, i.e. the transfer of gamma-glutamyl moiety to an acceptor molecule to yield a new gamma-glutamyl compound requires high concentration of dipeptide acceptor and is considered nonphysiological. This Mus musculus (Mouse) protein is Glutathione hydrolase 5 proenzyme (Ggt5).